We begin with the raw amino-acid sequence, 536 residues long: Allene oxide synthase, chloroplastic (536 aa).

The transit peptide at 1–58 directs the protein to the chloroplast; the sequence is MASSALNNLVAVNPNTLSPSPKSTPLPNTFSNLRRVSAFRPIKASLFGDSPIKIPGIT. Positions 151, 182, and 186 each coordinate heme b. (13S)-hydroperoxy-(9Z,11E)-octadecadienoate contacts are provided by S262, N339, and K345. Residue N339 participates in (13S)-hydroperoxy-(9Z,11E,15Z)-octadecatrienoate binding. Heme b-binding residues include K487 and C489.

Belongs to the cytochrome P450 family. It depends on heme b as a cofactor.

The protein resides in the plastid. Its subcellular location is the chloroplast. The enzyme catalyses (13S)-hydroperoxy-(9Z,11E,15Z)-octadecatrienoate = (9Z,13S,15Z)-12,13-epoxyoctadeca-9,11,15-trienoate + H2O. The catalysed reaction is (13S)-hydroperoxy-(9Z,11E)-octadecadienoate = (9Z,13S)-12,13-epoxyoctadeca-9,11-dienoate + H2O. It participates in lipid metabolism; oxylipin biosynthesis. Its function is as follows. Cytochrome P450 enzyme involved in the biosynthesis of oxylipin jasmonates, important phytohormones acting as growth regulators and signaling molecules for plant defense. Functions as an allene oxide synthase that converts hydroperoxy fatty acids to unstable allene epoxides. Catalyzes the dehydration of 13-HPOTE ((13S)-hydroperoxy-(9Z,11E,15Z)-octadecatrienoate), as well as 13-HPODE ((13S)-hydroperoxy-(9Z,11E)-octadecadienoate). This is Allene oxide synthase, chloroplastic (CYP74A) from Linum usitatissimum (Flax).